The chain runs to 191 residues: dCTP deaminase, dUMP-forming (191 aa).

DCTP contacts are provided by residues 101–106 (KSSLGR), aspartate 119, 127–129 (TLE), glutamine 148, tyrosine 162, and glutamine 174. Glutamate 129 serves as the catalytic Proton donor/acceptor. The segment at 163-191 (GSAKYGSRYQGQRGPTPSRSYQNFHRTPI) is disordered. Over residues 171–191 (YQGQRGPTPSRSYQNFHRTPI) the composition is skewed to polar residues.

This sequence belongs to the dCTP deaminase family. Homotrimer.

The catalysed reaction is dCTP + 2 H2O = dUMP + NH4(+) + diphosphate. It participates in pyrimidine metabolism; dUMP biosynthesis; dUMP from dCTP: step 1/1. Its function is as follows. Bifunctional enzyme that catalyzes both the deamination of dCTP to dUTP and the hydrolysis of dUTP to dUMP without releasing the toxic dUTP intermediate. This chain is dCTP deaminase, dUMP-forming, found in Nocardioides sp. (strain ATCC BAA-499 / JS614).